The sequence spans 372 residues: Chorismate synthase (372 aa).

Position 48 (Arg-48) interacts with NADP(+). FMN contacts are provided by residues 131 to 133 (RSS), 243 to 244 (NA), Gly-288, 303 to 307 (KPTSS), and Arg-329.

Belongs to the chorismate synthase family. In terms of assembly, homotetramer. FMNH2 is required as a cofactor.

It carries out the reaction 5-O-(1-carboxyvinyl)-3-phosphoshikimate = chorismate + phosphate. It functions in the pathway metabolic intermediate biosynthesis; chorismate biosynthesis; chorismate from D-erythrose 4-phosphate and phosphoenolpyruvate: step 7/7. Functionally, catalyzes the anti-1,4-elimination of the C-3 phosphate and the C-6 proR hydrogen from 5-enolpyruvylshikimate-3-phosphate (EPSP) to yield chorismate, which is the branch point compound that serves as the starting substrate for the three terminal pathways of aromatic amino acid biosynthesis. This reaction introduces a second double bond into the aromatic ring system. In Caulobacter vibrioides (strain ATCC 19089 / CIP 103742 / CB 15) (Caulobacter crescentus), this protein is Chorismate synthase.